A 322-amino-acid polypeptide reads, in one-letter code: N-acetyl-gamma-glutamyl-phosphate reductase 2 (322 aa).

The active site involves cysteine 117.

It belongs to the NAGSA dehydrogenase family. Type 2 subfamily.

The protein resides in the cytoplasm. The enzyme catalyses N-acetyl-L-glutamate 5-semialdehyde + phosphate + NADP(+) = N-acetyl-L-glutamyl 5-phosphate + NADPH + H(+). Its pathway is amino-acid biosynthesis; L-arginine biosynthesis; N(2)-acetyl-L-ornithine from L-glutamate: step 3/4. Its function is as follows. Catalyzes the NADPH-dependent reduction of N-acetyl-5-glutamyl phosphate to yield N-acetyl-L-glutamate 5-semialdehyde. The protein is N-acetyl-gamma-glutamyl-phosphate reductase 2 of Nostoc sp. (strain PCC 7120 / SAG 25.82 / UTEX 2576).